Consider the following 146-residue polypeptide: UPF0178 protein CTC_02403 (146 aa).

The protein belongs to the UPF0178 family.

In Clostridium tetani (strain Massachusetts / E88), this protein is UPF0178 protein CTC_02403.